Here is a 434-residue protein sequence, read N- to C-terminus: D-amino acid dehydrogenase (434 aa).

3-17 provides a ligand contact to FAD; sequence VIVLGSGVIGTTTAY.

Belongs to the DadA oxidoreductase family. The cofactor is FAD.

It carries out the reaction a D-alpha-amino acid + A + H2O = a 2-oxocarboxylate + AH2 + NH4(+). Oxidative deamination of D-amino acids. The chain is D-amino acid dehydrogenase from Bordetella bronchiseptica (strain ATCC BAA-588 / NCTC 13252 / RB50) (Alcaligenes bronchisepticus).